The primary structure comprises 1335 residues: MSPSKESDELIFFVNGKKVTERNADPEVNLLFYLRKVIRLTGTKYGCGGGDCGACTVMISRYDPISKRISHFSATACLVPICSLHGAAVTTVEGIGSTKTRIHPVQERIAKGHGTQCGFCTPGMVMSIYTLLRNHPEPSTEQIMETLGGNLCRCTGYRPIVESAKSFCPSSTCCQMNGEGKCCLDEEKNEPERKNSVCTKLYEKKEFQPLDPTQELIFPPELMRMAEESQNTVLTFRGERTTWIAPGTLNDLLELKMKHPSAPLVIGNTYLGLHMKFTDVSYPIIISPARILELFVVTNTKQGLTLGAGLSLTQVKNVLSDVVSRLPKEKTQIYCALLKQLKTLAGQQIRNVASLGGHIISRLPTSDLNPILGIGNCILNVASTEGIQQIPLNDHFLAGVPDAILKPEQVLISVFVPRSSKWEFVSAFRQAPRQQNAFATVNAGMKVVFKEDTNTITDLGILYGGIGATVISADKSCRQLIGRCWDEEMLDDAGKMICEEVSLLMAAPGGMEEYRKTLAISFLFMFYLDVLKQLKTRDPHKYPDISQKLLHILEDFPLTMPYGMQSFQDVDFQQPLQDPIGRPIMHQSGIKHATGEAVFCDDMSVLPGELFLAVVTSSKSHAKIISLDASEALASLGVVDVVTARDVPGDNGREEESLYAQDEVICVGQIVCAVAADSYAHAQQAAKKVKIVYQDIEPMIVTVQDALQYESFIGPERKLEQGNVEEAFQCADQILEGEVHLGGQEHFYMETQSVRVVPKGEDKEMDIYVSSQDAAFTQEMVARTLGIPKNRINCHVKRVGGAFGGKASKPGLLASVAAVAAQKTGRPIRFILERRDDMLITGGRHPLLGKYKIGFMNNGKIKAADIQLYINGGCTPDDSELVIEYALLKLENAYKIPNLRVRGRVCKTNLPSNTAFRGFGFPQGAFVTETCMSAVAAKCRLPPEKVRELNMYRTIDRTIHNQEFDPTNLLQCWEACVENSSYYNRKKAVDEFNQQRFWKKRGIAIIPMKFSVGFPKTFYYQAAALVQIYTDGSVLVAHGGVELGQGINTKMIQVASRELKIPMSYIHLDEMSTVTVPNTVTTGASTGADVNGRAVQNACQILMKRLEPIIKQNPSGTWEEWVKEAFVQSISLSATGYFRGYQADMDWEKGEGDIFPYFVFGAACSEVEIDCLTGAHKNIRTDIVMDGSFSINPAVDIGQIEGAFVQGLGLYTLEELKYSPEGVLYTRGPHQYKIASVTDIPEEFHVSLLTPTPNPKAIYSSKGLGEAGTFLGCSVFFAIAAAVAAAREERGLSPIWAINSPATAEVIRMACEDQFTNLVPQTDSKCCKPWSIPVA.

In terms of domain architecture, 2Fe-2S ferredoxin-type spans 8–95 (DELIFFVNGK…GAAVTTVEGI (88 aa)). 4 residues coordinate [2Fe-2S] cluster: C47, C52, C55, and C77. Q116 contributes to the Mo-molybdopterin binding site. C117, C120, C152, and C154 together coordinate [2Fe-2S] cluster. The 186-residue stretch at 236-421 (FRGERTTWIA…ISVFVPRSSK (186 aa)) folds into the FAD-binding PCMH-type domain. 264 to 271 (LVIGNTYL) contributes to the FAD binding site. At S320 the chain carries Phosphoserine. The FAD site is built by S354, H358, D367, and L411. Positions 802, 1043, and 1199 each coordinate Mo-molybdopterin. The Proton acceptor; for azaheterocycle hydroxylase activity role is filled by E1266.

It belongs to the xanthine dehydrogenase family. Homodimer. The cofactor is [2Fe-2S] cluster. FAD is required as a cofactor. It depends on Mo-molybdopterin as a cofactor. As to expression, highly expressed in liver (at protein level). In liver, the expression is greater in males than females.

Its subcellular location is the cytoplasm. It carries out the reaction an aldehyde + O2 + H2O = a carboxylate + H2O2 + H(+). Inhibited by potassium cyanide, menadione, benzamidine, raloxifene and norharmane. In terms of biological role, oxidase with broad substrate specificity, oxidizing aromatic azaheterocycles, such as N1-methylnicotinamide and phthalazine, as well as aldehydes, such as benzaldehyde, retinal and pyridoxal. Plays a key role in the metabolism of xenobiotics and drugs containing aromatic azaheterocyclic substituents. Is probably involved in the regulation of reactive oxygen species homeostasis. May be a prominent source of superoxide generation via the one-electron reduction of molecular oxygen. May also catalyze nitric oxide (NO) production via the reduction of nitrite to NO with NADH or aldehyde as electron donor. This chain is Aldehyde oxidase 3 (Aox3), found in Mus musculus (Mouse).